The following is a 63-amino-acid chain: MATATTKTVKVRQTGSPIRRNAVQRATLAGLGLNKLGRESELEDTPSVRGMIRKVQHLLEIVE.

It belongs to the universal ribosomal protein uL30 family. Part of the 50S ribosomal subunit.

The sequence is that of Large ribosomal subunit protein uL30 from Caulobacter sp. (strain K31).